The primary structure comprises 419 residues: UDP-N-acetylglucosamine 1-carboxyvinyltransferase (419 aa).

Residue 22–23 (KN) coordinates phosphoenolpyruvate. Arg91 is a UDP-N-acetyl-alpha-D-glucosamine binding site. The active-site Proton donor is the Cys115. At Cys115 the chain carries 2-(S-cysteinyl)pyruvic acid O-phosphothioketal. UDP-N-acetyl-alpha-D-glucosamine contacts are provided by residues 120–124 (RPVDL), 160–163 (KVSV), Asp305, and Val327.

This sequence belongs to the EPSP synthase family. MurA subfamily.

The protein resides in the cytoplasm. It catalyses the reaction phosphoenolpyruvate + UDP-N-acetyl-alpha-D-glucosamine = UDP-N-acetyl-3-O-(1-carboxyvinyl)-alpha-D-glucosamine + phosphate. Its pathway is cell wall biogenesis; peptidoglycan biosynthesis. In terms of biological role, cell wall formation. Adds enolpyruvyl to UDP-N-acetylglucosamine. The sequence is that of UDP-N-acetylglucosamine 1-carboxyvinyltransferase from Salmonella dublin (strain CT_02021853).